A 339-amino-acid chain; its full sequence is Glycerol-3-phosphate dehydrogenase [NAD(P)+] (339 aa).

The NADPH site is built by S11, W12, and K109. Sn-glycerol 3-phosphate is bound by residues K109, G140, and S142. An NADPH-binding site is contributed by A144. K195, D249, S259, R260, and N261 together coordinate sn-glycerol 3-phosphate. K195 acts as the Proton acceptor in catalysis. R260 is an NADPH binding site. Positions 284 and 286 each coordinate NADPH.

It belongs to the NAD-dependent glycerol-3-phosphate dehydrogenase family.

It localises to the cytoplasm. The catalysed reaction is sn-glycerol 3-phosphate + NAD(+) = dihydroxyacetone phosphate + NADH + H(+). It catalyses the reaction sn-glycerol 3-phosphate + NADP(+) = dihydroxyacetone phosphate + NADPH + H(+). It participates in membrane lipid metabolism; glycerophospholipid metabolism. In terms of biological role, catalyzes the reduction of the glycolytic intermediate dihydroxyacetone phosphate (DHAP) to sn-glycerol 3-phosphate (G3P), the key precursor for phospholipid synthesis. The polypeptide is Glycerol-3-phosphate dehydrogenase [NAD(P)+] (Lactobacillus helveticus (strain DPC 4571)).